Reading from the N-terminus, the 242-residue chain is MAGHSKWANIKHKKAAADAKRGKVWTRLIKEIQVAARMGGGDIDSNPRLRLAVEKAYDANMPKDNVNRAIQRGVGGVDGASYEEIRYEGYGIGGAAVIVDTMTDNRTRTVAEVRHAFSKNGGNMGTDGSVSFMFDHVGQFLFAPGTPEDKLMEAALEAGAEDVVTNDDGSIEVLCPPNDFPKVKSALEAAGFKAELAEVTMKPQTEVEFTGEDAVKMQKLLDALENLDDVQEVYTNAAIAEE.

It belongs to the TACO1 family.

It is found in the cytoplasm. The protein is Probable transcriptional regulatory protein Bxeno_A1185 of Paraburkholderia xenovorans (strain LB400).